The primary structure comprises 203 residues: Urease accessory protein UreG (203 aa).

14-21 (GPVGSGKT) lines the GTP pocket.

It belongs to the SIMIBI class G3E GTPase family. UreG subfamily. In terms of assembly, homodimer. UreD, UreF and UreG form a complex that acts as a GTP-hydrolysis-dependent molecular chaperone, activating the urease apoprotein by helping to assemble the nickel containing metallocenter of UreC. The UreE protein probably delivers the nickel.

It is found in the cytoplasm. Its function is as follows. Facilitates the functional incorporation of the urease nickel metallocenter. This process requires GTP hydrolysis, probably effectuated by UreG. In Rhizobium rhizogenes (strain K84 / ATCC BAA-868) (Agrobacterium radiobacter), this protein is Urease accessory protein UreG.